The sequence spans 482 residues: Transcription termination/antitermination protein NusA (482 aa).

The S1 motif domain occupies Asn133–Thr197. Positions Leu300–Val446 constitute a KH domain.

Belongs to the NusA family. Monomer. Binds directly to the core enzyme of the DNA-dependent RNA polymerase and to nascent RNA.

The protein localises to the cytoplasm. In terms of biological role, participates in both transcription termination and antitermination. The chain is Transcription termination/antitermination protein NusA from Borreliella burgdorferi (strain ATCC 35210 / DSM 4680 / CIP 102532 / B31) (Borrelia burgdorferi).